Here is a 741-residue protein sequence, read N- to C-terminus: uncharacterized protein (741 aa).

Residues 1 to 18 (MKTISILAFLVLARLIEA) form the signal peptide. 3 disordered regions span residues 142–300 (PKVE…GNVD), 423–528 (EEDE…SEQG), and 646–681 (ETVA…VEDD). Residues 147–165 (EEEEEEYDGEEDDDDESLT) are compositionally biased toward acidic residues. Composition is skewed to low complexity over residues 183–197 (VEPS…STTE) and 205–266 (STTV…SSTT). Asn232 and Asn241 each carry an N-linked (GlcNAc...) asparagine glycan. A compositionally biased stretch (acidic residues) spans 423 to 432 (EEDEIDETET). Residues 433–451 (TESTKTTETTKTTGPAETT) are compositionally biased toward low complexity. Asn461 and Asn511 each carry an N-linked (GlcNAc...) asparagine glycan. The segment covering 500–511 (PIDESTESEEPN) has biased composition (acidic residues). The segment covering 512–528 (ESVTVTGDTTTDTSEQG) has biased composition (low complexity). The segment covering 646 to 656 (ETVAPDTNSPD) has biased composition (polar residues). Acidic residues predominate over residues 657–671 (ADQEQPDSVEPDNET). The N-linked (GlcNAc...) asparagine glycan is linked to Asn669. Asn719 carries GPI-anchor amidated asparagine lipidation. The propeptide at 720 to 741 (AANLAGSISLSSGVLLLILMLI) is removed in mature form.

The protein resides in the cell membrane. This is an uncharacterized protein from Candida albicans (strain SC5314 / ATCC MYA-2876) (Yeast).